The chain runs to 545 residues: CTP synthase (545 aa).

Residues 1–266 form an amidoligase domain region; the sequence is MATNYIFVTG…DDIVTKRFNL (266 aa). Ser-14 provides a ligand contact to CTP. Residue Ser-14 coordinates UTP. ATP is bound by residues 15–20 and Asp-72; that span reads SLGKGI. Mg(2+) contacts are provided by Asp-72 and Glu-140. CTP contacts are provided by residues 147 to 149, 187 to 192, and Lys-223; these read DIE and KTKPTQ. Residues 187–192 and Lys-223 contribute to the UTP site; that span reads KTKPTQ. 239 to 241 is an ATP binding site; that stretch reads RDV. Residues 291–542 enclose the Glutamine amidotransferase type-1 domain; it reads TVGFVGKYVE…IEAAGEFHKE (252 aa). Gly-352 is an L-glutamine binding site. Cys-379 (nucleophile; for glutamine hydrolysis) is an active-site residue. Residues 380 to 383, Glu-403, and Arg-470 each bind L-glutamine; that span reads LGMQ. Catalysis depends on residues His-515 and Glu-517.

Belongs to the CTP synthase family. In terms of assembly, homotetramer.

The catalysed reaction is UTP + L-glutamine + ATP + H2O = CTP + L-glutamate + ADP + phosphate + 2 H(+). It catalyses the reaction L-glutamine + H2O = L-glutamate + NH4(+). The enzyme catalyses UTP + NH4(+) + ATP = CTP + ADP + phosphate + 2 H(+). It functions in the pathway pyrimidine metabolism; CTP biosynthesis via de novo pathway; CTP from UDP: step 2/2. Its activity is regulated as follows. Allosterically activated by GTP, when glutamine is the substrate; GTP has no effect on the reaction when ammonia is the substrate. The allosteric effector GTP functions by stabilizing the protein conformation that binds the tetrahedral intermediate(s) formed during glutamine hydrolysis. Inhibited by the product CTP, via allosteric rather than competitive inhibition. Catalyzes the ATP-dependent amination of UTP to CTP with either L-glutamine or ammonia as the source of nitrogen. Regulates intracellular CTP levels through interactions with the four ribonucleotide triphosphates. In Idiomarina loihiensis (strain ATCC BAA-735 / DSM 15497 / L2-TR), this protein is CTP synthase.